The chain runs to 456 residues: Gamma-aminobutyric acid receptor subunit alpha-1 (456 aa).

Positions 1–27 (MKKSPGLSDYLWAWTLFLSTLTGRSYG) are cleaved as a signal peptide. Topologically, residues 28-253 (QPSLQDELKD…FHLKRKIGYF (226 aa)) are extracellular. An N-linked (GlcNAc...) asparagine glycan is attached at Asn-38. 4-aminobutanoate is bound at residue Arg-94. Residue Asn-138 is glycosylated (N-linked (GlcNAc...) asparagine). Thr-157 is a binding site for 4-aminobutanoate. Cys-166 and Cys-180 are oxidised to a cystine. Residues 254–274 (VIQTYLPCIMTVILSQVSFWL) form a helical membrane-spanning segment. Residues 275–279 (NRESV) are Cytoplasmic-facing. Residues 280 to 301 (PARTVFGVTTVLTMTTLSISAR) traverse the membrane as a helical segment. Topologically, residues 302–311 (NSLPKVAYAT) are extracellular. The helical transmembrane segment at 312 to 333 (AMDWFIAVCYAFVFSALIEFAT) threads the bilayer. Residues 334 to 421 (VNYFTKRGYA…TFNSVSKIDR (88 aa)) lie on the Cytoplasmic side of the membrane. A helical transmembrane segment spans residues 422 to 441 (LSRIAFPLLFGIFNLVYWAT). Topologically, residues 442–456 (YLNREPQLKAPTPHQ) are extracellular.

It belongs to the ligand-gated ion channel (TC 1.A.9) family. Gamma-aminobutyric acid receptor (TC 1.A.9.5) subfamily. GABRA1 sub-subfamily. As to quaternary structure, heteropentamer, formed by a combination of alpha (GABRA1-6), beta (GABRB1-3), gamma (GABRG1-3), delta (GABRD), epsilon (GABRE), rho (GABRR1-3), pi (GABRP) and theta (GABRQ) subunits, each subunit exhibiting distinct physiological and pharmacological properties. Interacts with UBQLN1. Interacts with TRAK1. Interacts with KIF21B. Identified in a complex of 720 kDa composed of LHFPL4, NLGN2, GABRA1, GABRB2, GABRG2 and GABRB3. Interacts with LHFPL4. Interacts with NLGN2. Interacts with SHISA7; interaction leads to the regulation of GABA(A) receptor trafficking, channel deactivation kinetics and pharmacology. Cerebellar granule cells, Purkinje cells and stellate/basket cells.

It localises to the postsynaptic cell membrane. It is found in the cell membrane. Its subcellular location is the cytoplasmic vesicle membrane. It catalyses the reaction chloride(in) = chloride(out). With respect to regulation, allosterically activated by benzodiazepines, the neuroanesthetic alphaxalone and pentobarbital. Inhibited by the antagonist bicuculline. Potentiated by histamine. Alpha subunit of the heteropentameric ligand-gated chloride channel gated by gamma-aminobutyric acid (GABA), a major inhibitory neurotransmitter in the brain. GABA-gated chloride channels, also named GABA(A) receptors (GABAAR), consist of five subunits arranged around a central pore and contain GABA active binding site(s) located at the alpha and beta subunit interface(s). When activated by GABA, GABAARs selectively allow the flow of chloride anions across the cell membrane down their electrochemical gradient. Alpha-1/GABRA1-containing GABAARs are largely synaptic. Chloride influx into the postsynaptic neuron following GABAAR opening decreases the neuron ability to generate a new action potential, thereby reducing nerve transmission. GABAARs containing alpha-1 and beta-2 or -3 subunits exhibit synaptogenic activity; the gamma-2 subunit being necessary but not sufficient to induce rapid synaptic contacts formation. GABAARs function also as histamine receptor where histamine binds at the interface of two neighboring beta subunits and potentiates GABA response. GABAARs containing alpha, beta and epsilon subunits also permit spontaneous chloride channel activity while preserving the structural information required for GABA-gated openings. Alpha-1-mediated plasticity in the orbitofrontal cortex regulates context-dependent action selection. Together with rho subunits, may also control neuronal and glial GABAergic transmission in the cerebellum. In Bos taurus (Bovine), this protein is Gamma-aminobutyric acid receptor subunit alpha-1 (GABRA1).